Consider the following 365-residue polypeptide: Selina-4(15),7(11)-diene synthase ((2E,6E)-farnesyl diphosphate cyclizing) (365 aa).

Positions 82 and 87 each coordinate Mg(2+). Positions aspartate 82–glutamate 87 match the DDXXXE motif motif. Arginine 178 lines the substrate pocket. Residues asparagine 224 and serine 228 each coordinate Mg(2+). Substrate is bound at residue lysine 231. Position 232 (glutamate 232) interacts with Mg(2+). A substrate-binding site is contributed by arginine 310–tyrosine 311.

The protein belongs to the terpene synthase family. As to quaternary structure, monomer. The cofactor is Mg(2+).

The enzyme catalyses (2E,6E)-farnesyl diphosphate = selina-4(15),7(11)-diene + diphosphate. It participates in secondary metabolite biosynthesis; terpenoid biosynthesis. Functionally, catalyzes the conversion of (2E,6E)-farnesyl diphosphate (FPP) to yield the bicyclic sesquiterpene selina-4(15),7(11)-diene via a 1,10-cyclization, which requires the abstraction of the pyrophosphate from FPP leading to a (E,E)-germacradienyl cation. The only accepted substrate is (2E,6E)-farnesyl diphosphate (FPP). This is Selina-4(15),7(11)-diene synthase ((2E,6E)-farnesyl diphosphate cyclizing) from Streptomyces pristinaespiralis (strain ATCC 25486 / DSM 40338 / CBS 914.69 / JCM 4507 / KCC S-0507 / NBRC 13074 / NRRL 2958 / 5647).